A 325-amino-acid polypeptide reads, in one-letter code: Quinone oxidoreductase (325 aa).

The protein belongs to the zinc-containing alcohol dehydrogenase family. Quinone oxidoreductase subfamily.

The enzyme catalyses 2 a quinone + NADPH + H(+) = 2 a 1,4-benzosemiquinone + NADP(+). This is Quinone oxidoreductase (qor) from Pseudomonas aeruginosa (strain ATCC 15692 / DSM 22644 / CIP 104116 / JCM 14847 / LMG 12228 / 1C / PRS 101 / PAO1).